Here is a 761-residue protein sequence, read N- to C-terminus: RNA-binding protein 12B (761 aa).

A phosphoserine mark is found at S98, S101, and S112. K114 is covalently cross-linked (Glycyl lysine isopeptide (Lys-Gly) (interchain with G-Cter in SUMO2)). The interval 120–147 is disordered; that stretch reads SGYGSSINQDAGFHSNGTGHGNLRPRKT. K151 participates in a covalent cross-link: Glycyl lysine isopeptide (Lys-Gly) (interchain with G-Cter in SUMO2). Positions 155–230 constitute an RRM 1 domain; that stretch reads PYLFLRGLPY…RFIEVMQGSE (76 aa). Over residues 247-262 the composition is skewed to basic and acidic residues; the sequence is LRRSEEHSPPRGINDR. The segment at 247–278 is disordered; the sequence is LRRSEEHSPPRGINDRHFRKRSHSKSPRRTRS. Residues S250 and S254 each carry the phosphoserine modification. Residues 263-278 show a composition bias toward basic residues; it reads HFRKRSHSKSPRRTRS. The residue at position 276 (T276) is a Phosphothreonine. Phosphoserine is present on residues S278, S280, S292, and S294. The RRM 2 domain maps to 284–360; that stretch reads FYVHLKNLSL…RPVHIDPISR (77 aa). K319 carries the N6-acetyllysine modification. K335 participates in a covalent cross-link: Glycyl lysine isopeptide (Lys-Gly) (interchain with G-Cter in SUMO2). A compositionally biased stretch (basic and acidic residues) spans 372 to 384; it reads KKRSGSPERDRPG. The segment at 372–392 is disordered; sequence KKRSGSPERDRPGHVSQKYSQ. The residue at position 377 (S377) is a Phosphoserine. One can recognise an RRM 3 domain in the interval 400–477; sequence LCIYIRNFPF…TEVLLRLISE (78 aa). Glycyl lysine isopeptide (Lys-Gly) (interchain with G-Cter in SUMO2) cross-links involve residues K514 and K541. Residues 538–621 show a composition bias toward basic and acidic residues; the sequence is DNFKHPQRDF…RHPREEDWRR (84 aa). A disordered region spans residues 538–690; sequence DNFKHPQRDF…THQMKTSGAL (153 aa). S575 and S591 each carry phosphoserine. Positions 627 to 654 are enriched in polar residues; that stretch reads LQSTSGGHPQSISGGHPQSISGARPRST. The span at 661–672 shows a compositional bias: low complexity; sequence SISGGRLRSISG.

In Pongo abelii (Sumatran orangutan), this protein is RNA-binding protein 12B (RBM12B).